Reading from the N-terminus, the 362-residue chain is tRNA N6-adenosine threonylcarbamoyltransferase (362 aa).

Residues His-116 and His-120 each contribute to the Fe cation site. Substrate is bound by residues 138-142, Asp-171, Gly-184, and Asn-284; that span reads LVSGG. Position 312 (Asp-312) interacts with Fe cation.

This sequence belongs to the KAE1 / TsaD family. The cofactor is Fe(2+).

It localises to the cytoplasm. It catalyses the reaction L-threonylcarbamoyladenylate + adenosine(37) in tRNA = N(6)-L-threonylcarbamoyladenosine(37) in tRNA + AMP + H(+). Required for the formation of a threonylcarbamoyl group on adenosine at position 37 (t(6)A37) in tRNAs that read codons beginning with adenine. Is involved in the transfer of the threonylcarbamoyl moiety of threonylcarbamoyl-AMP (TC-AMP) to the N6 group of A37, together with TsaE and TsaB. TsaD likely plays a direct catalytic role in this reaction. This Chelativorans sp. (strain BNC1) protein is tRNA N6-adenosine threonylcarbamoyltransferase.